Consider the following 350-residue polypeptide: UDP-3-O-acylglucosamine N-acyltransferase (350 aa).

His-251 (proton acceptor) is an active-site residue.

This sequence belongs to the transferase hexapeptide repeat family. LpxD subfamily. As to quaternary structure, homotrimer.

The catalysed reaction is a UDP-3-O-[(3R)-3-hydroxyacyl]-alpha-D-glucosamine + a (3R)-hydroxyacyl-[ACP] = a UDP-2-N,3-O-bis[(3R)-3-hydroxyacyl]-alpha-D-glucosamine + holo-[ACP] + H(+). It participates in bacterial outer membrane biogenesis; LPS lipid A biosynthesis. Functionally, catalyzes the N-acylation of UDP-3-O-acylglucosamine using 3-hydroxyacyl-ACP as the acyl donor. Is involved in the biosynthesis of lipid A, a phosphorylated glycolipid that anchors the lipopolysaccharide to the outer membrane of the cell. The polypeptide is UDP-3-O-acylglucosamine N-acyltransferase (Prochlorococcus marinus (strain NATL2A)).